The sequence spans 103 residues: Large ribosomal subunit protein bL21 (103 aa).

Belongs to the bacterial ribosomal protein bL21 family. As to quaternary structure, part of the 50S ribosomal subunit. Contacts protein L20.

Its function is as follows. This protein binds to 23S rRNA in the presence of protein L20. The chain is Large ribosomal subunit protein bL21 from Verminephrobacter eiseniae (strain EF01-2).